The following is a 607-amino-acid chain: Elongation factor 4 (607 aa).

In terms of domain architecture, tr-type G spans 11–193; the sequence is KNIRNFSIIA…KIVETIPAPS (183 aa). GTP is bound by residues 23–28 and 140–143; these read DHGKST and NKID.

It belongs to the TRAFAC class translation factor GTPase superfamily. Classic translation factor GTPase family. LepA subfamily.

Its subcellular location is the cell membrane. The catalysed reaction is GTP + H2O = GDP + phosphate + H(+). Required for accurate and efficient protein synthesis under certain stress conditions. May act as a fidelity factor of the translation reaction, by catalyzing a one-codon backward translocation of tRNAs on improperly translocated ribosomes. Back-translocation proceeds from a post-translocation (POST) complex to a pre-translocation (PRE) complex, thus giving elongation factor G a second chance to translocate the tRNAs correctly. Binds to ribosomes in a GTP-dependent manner. This is Elongation factor 4 from Staphylococcus carnosus (strain TM300).